The chain runs to 1417 residues: DNA-directed RNA polymerase subunit beta' (1417 aa).

Residues cysteine 68, cysteine 70, cysteine 83, and cysteine 86 each coordinate Zn(2+). Mg(2+)-binding residues include aspartate 458, aspartate 460, and aspartate 462. 4 residues coordinate Zn(2+): cysteine 811, cysteine 884, cysteine 891, and cysteine 894.

The protein belongs to the RNA polymerase beta' chain family. In terms of assembly, the RNAP catalytic core consists of 2 alpha, 1 beta, 1 beta' and 1 omega subunit. When a sigma factor is associated with the core the holoenzyme is formed, which can initiate transcription. Requires Mg(2+) as cofactor. Zn(2+) serves as cofactor.

It catalyses the reaction RNA(n) + a ribonucleoside 5'-triphosphate = RNA(n+1) + diphosphate. Functionally, DNA-dependent RNA polymerase catalyzes the transcription of DNA into RNA using the four ribonucleoside triphosphates as substrates. In Francisella tularensis subsp. novicida (strain U112), this protein is DNA-directed RNA polymerase subunit beta'.